A 493-amino-acid chain; its full sequence is Arginine decarboxylase (493 aa).

Lysine 229 bears the N6-(pyridoxal phosphate)lysine mark.

The protein belongs to the Orn/Lys/Arg decarboxylase class-I family. The cofactor is pyridoxal 5'-phosphate.

It localises to the cytoplasm. It catalyses the reaction L-arginine + H(+) = agmatine + CO2. Its pathway is amine and polyamine biosynthesis; agmatine biosynthesis; agmatine from L-arginine: step 1/1. Catalyzes the formation of agmatine from arginine. The sequence is that of Arginine decarboxylase (speA) from Bacillus anthracis.